We begin with the raw amino-acid sequence, 146 residues long: uncharacterized protein (146 aa).

Residues 86–96 are compositionally biased toward acidic residues; sequence EFDSPMDEEEE. Residues 86–124 are disordered; sequence EFDSPMDEEEETKPREASLDQTAPKKSKKEELLVKNNNF.

This is an uncharacterized protein from Ostreid herpesvirus 1 (isolate France) (OsHV-1).